We begin with the raw amino-acid sequence, 123 residues long: UPF0102 protein VSAL_I2655 (123 aa).

The protein belongs to the UPF0102 family.

In Aliivibrio salmonicida (strain LFI1238) (Vibrio salmonicida (strain LFI1238)), this protein is UPF0102 protein VSAL_I2655.